Here is a 286-residue protein sequence, read N- to C-terminus: 3-methyl-2-oxobutanoate hydroxymethyltransferase (286 aa).

Mg(2+) is bound by residues aspartate 51 and aspartate 90. 3-methyl-2-oxobutanoate is bound by residues 51–52, aspartate 90, and lysine 120; that span reads DS. Residue glutamate 122 coordinates Mg(2+). The Proton acceptor role is filled by glutamate 189. Positions 263-286 are disordered; sequence TFPGPSHVFSGSKASSDLNGGDES.

Belongs to the PanB family. In terms of assembly, homodecamer; pentamer of dimers. Requires Mg(2+) as cofactor.

Its subcellular location is the cytoplasm. The enzyme catalyses 3-methyl-2-oxobutanoate + (6R)-5,10-methylene-5,6,7,8-tetrahydrofolate + H2O = 2-dehydropantoate + (6S)-5,6,7,8-tetrahydrofolate. It functions in the pathway cofactor biosynthesis; (R)-pantothenate biosynthesis; (R)-pantoate from 3-methyl-2-oxobutanoate: step 1/2. Catalyzes the reversible reaction in which hydroxymethyl group from 5,10-methylenetetrahydrofolate is transferred onto alpha-ketoisovalerate to form ketopantoate. This chain is 3-methyl-2-oxobutanoate hydroxymethyltransferase, found in Mesorhizobium japonicum (strain LMG 29417 / CECT 9101 / MAFF 303099) (Mesorhizobium loti (strain MAFF 303099)).